We begin with the raw amino-acid sequence, 426 residues long: Serine hydroxymethyltransferase (426 aa).

Residues Leu-113 and 117–119 (GHL) each bind (6S)-5,6,7,8-tetrahydrofolate. Position 222 is an N6-(pyridoxal phosphate)lysine (Lys-222). Position 363–365 (363–365 (SAF)) interacts with (6S)-5,6,7,8-tetrahydrofolate.

Belongs to the SHMT family. In terms of assembly, homodimer. Pyridoxal 5'-phosphate serves as cofactor.

The protein localises to the cytoplasm. It carries out the reaction (6R)-5,10-methylene-5,6,7,8-tetrahydrofolate + glycine + H2O = (6S)-5,6,7,8-tetrahydrofolate + L-serine. It participates in one-carbon metabolism; tetrahydrofolate interconversion. The protein operates within amino-acid biosynthesis; glycine biosynthesis; glycine from L-serine: step 1/1. In terms of biological role, catalyzes the reversible interconversion of serine and glycine with tetrahydrofolate (THF) serving as the one-carbon carrier. This reaction serves as the major source of one-carbon groups required for the biosynthesis of purines, thymidylate, methionine, and other important biomolecules. Also exhibits THF-independent aldolase activity toward beta-hydroxyamino acids, producing glycine and aldehydes, via a retro-aldol mechanism. In Bacteroides thetaiotaomicron (strain ATCC 29148 / DSM 2079 / JCM 5827 / CCUG 10774 / NCTC 10582 / VPI-5482 / E50), this protein is Serine hydroxymethyltransferase.